Consider the following 285-residue polypeptide: Protease HtpX homolog (285 aa).

The next 2 membrane-spanning stretches (helical) occupy residues 7-27 (TAML…MIGG) and 30-50 (GMTI…WFSD). His131 contacts Zn(2+). The active site involves Glu132. His135 serves as a coordination point for Zn(2+). The next 2 helical transmembrane spans lie at 146–166 (ITAT…FFGG) and 177–197 (IAGI…QMAI). Position 202 (Glu202) interacts with Zn(2+).

The protein belongs to the peptidase M48B family. The cofactor is Zn(2+).

The protein localises to the cell inner membrane. The sequence is that of Protease HtpX homolog from Burkholderia ambifaria (strain MC40-6).